The primary structure comprises 75 residues: Exodeoxyribonuclease 7 small subunit (75 aa).

The protein belongs to the XseB family. In terms of assembly, heterooligomer composed of large and small subunits.

Its subcellular location is the cytoplasm. The catalysed reaction is Exonucleolytic cleavage in either 5'- to 3'- or 3'- to 5'-direction to yield nucleoside 5'-phosphates.. Bidirectionally degrades single-stranded DNA into large acid-insoluble oligonucleotides, which are then degraded further into small acid-soluble oligonucleotides. In Listeria welshimeri serovar 6b (strain ATCC 35897 / DSM 20650 / CCUG 15529 / CIP 8149 / NCTC 11857 / SLCC 5334 / V8), this protein is Exodeoxyribonuclease 7 small subunit.